A 60-amino-acid polypeptide reads, in one-letter code: Large ribosomal subunit protein bL32 (60 aa).

The span at 1–16 (MAVPKRKTSPSKRGMR) shows a compositional bias: basic residues. The interval 1-60 (MAVPKRKTSPSKRGMRRSADALKAPTYVEDKNSGEMRRPHHIDLKTGMYRGRQVLTPKES) is disordered. Residues 28–44 (VEDKNSGEMRRPHHIDL) are compositionally biased toward basic and acidic residues.

This sequence belongs to the bacterial ribosomal protein bL32 family.

The protein is Large ribosomal subunit protein bL32 of Mesorhizobium japonicum (strain LMG 29417 / CECT 9101 / MAFF 303099) (Mesorhizobium loti (strain MAFF 303099)).